Consider the following 450-residue polypeptide: Exodeoxyribonuclease 7 large subunit (450 aa).

It belongs to the XseA family. Heterooligomer composed of large and small subunits.

It is found in the cytoplasm. It catalyses the reaction Exonucleolytic cleavage in either 5'- to 3'- or 3'- to 5'-direction to yield nucleoside 5'-phosphates.. Bidirectionally degrades single-stranded DNA into large acid-insoluble oligonucleotides, which are then degraded further into small acid-soluble oligonucleotides. The protein is Exodeoxyribonuclease 7 large subunit of Listeria innocua serovar 6a (strain ATCC BAA-680 / CLIP 11262).